We begin with the raw amino-acid sequence, 436 residues long: MDDLNYATLTEALEQTVFENFDDGLYIGMMSGTSLDGMDAILCQFSNHTNSSNISNEDNTQQPMHLLATYSQDFPPRLREVLLALCQPNGINQLTPTAGEPDSELEWFGWASKAYAEFASDVVNTLLQQSNTDIESVLAIGCHGQTVRHRPQMGFSLQLVDANIIAERTGISVVSDFRRRDMAVGGQGAPLVPAFHQALFAVPDSTRILLNLGGIANIAVLPAISDDLSDFNEHSDNQPSDSVVGYDTGPANLLLDAWTALHTDKDYDAGGTWAQSGQVVEPLLNQLLEHPFFVKAYPKSTGREDFNLAWLQDELQKFDQAAADIRYSSADVQATLTELTAISASAQINIFINASSNNAVYVCGGGALNDYLMMRLQAHLPRCKVETTASLGLEPTWVEAVAFAWLARQTLMGETGNLPAVTGASKGVVLGQVCFA.

Position 32–39 (32–39 (GTSLDGMD)) interacts with ATP.

It belongs to the anhydro-N-acetylmuramic acid kinase family.

It carries out the reaction 1,6-anhydro-N-acetyl-beta-muramate + ATP + H2O = N-acetyl-D-muramate 6-phosphate + ADP + H(+). Its pathway is amino-sugar metabolism; 1,6-anhydro-N-acetylmuramate degradation. It functions in the pathway cell wall biogenesis; peptidoglycan recycling. In terms of biological role, catalyzes the specific phosphorylation of 1,6-anhydro-N-acetylmuramic acid (anhMurNAc) with the simultaneous cleavage of the 1,6-anhydro ring, generating MurNAc-6-P. Is required for the utilization of anhMurNAc either imported from the medium or derived from its own cell wall murein, and thus plays a role in cell wall recycling. The chain is Anhydro-N-acetylmuramic acid kinase from Psychrobacter arcticus (strain DSM 17307 / VKM B-2377 / 273-4).